The chain runs to 914 residues: MPGEAPVEDYDPKEIEPKWRERWLEERKYRFEGGEDRPAFVIDTPPPYPTGELHMGHVLNWTYMDVVARYKRMCGYDVFFPQGWDCHGLPTEVKVEEIHGITKRDAPRREFRKLCEELTLENIRKMREQLIQLGCSIDWWTDCIDYENEELKELGSYVTMDPDYIRRSQYGFLELLEKGYAYREEHPVNWCPRCETAIAFAEVEYVTRETYLNYIEFPVADGDGSVTIATTRPELLPACVAVAVHPDDDRYSDLVGKKLVVPLHERFGDRDTPWEVPVIADEEVDPEFGTGIVMICTFGDKQDVAWVKRHDLPIVRAIDEQGKMTEVAGEFAGMEVEEARAAIVEALKEEGYLVKREKITQNVGVCWRCKTPIEILVKEQWFVKVRELAEDVKEAARKMVWIPEHMRKRLEDWTESMDWDWCISRQRIFATPIPVWYCKECGEVIPAEKDQLPVDPTRDDPPVDECPKCGCSEFEPETDVMDTWMDSSITPLVITGWPDEEPDLPVDLRPQGHDIIRTWLYYTTVRALVHADTEPFKEILINGMVFGEDGYKMSKSRGNVVEPTEVIEEYGADALRYWAVSSGAPGSDVQYMTKTIKRGYRFAKKIWNVCRLAKDHIDDAPSVEEVEGDLTPADRWILSKFHRLVDEVTEHLESGYRFNDAIKAIEEFAWEELADDYLEMAKLRLYRPEELGEGSREAARAVLRHVLDGLLRLLAPFMPFVTEELYYRLFDESVHDQAWPEASEKWIDEGVEEVGEILREIVTEVRKAKTDAGLRMGAEFEGLTVHVQDEELAESLEKAIPDLKSATRAKEVEVEVGEPKLERVPVKVEPRMDVIGPKYRELTRDIIEYVENNPDEVASAIKEDGKAKLEIDGEKVVLDEECVDVEWELRVKGGEGKAVEIRPGVVVEIRGLST.

Positions proline 47–histidine 57 match the 'HIGH' region motif. The 'KMSKS' region motif lies at lysine 552–serine 556. Lysine 555 serves as a coordination point for ATP.

It belongs to the class-I aminoacyl-tRNA synthetase family. ValS type 2 subfamily.

Its subcellular location is the cytoplasm. The catalysed reaction is tRNA(Val) + L-valine + ATP = L-valyl-tRNA(Val) + AMP + diphosphate. Catalyzes the attachment of valine to tRNA(Val). As ValRS can inadvertently accommodate and process structurally similar amino acids such as threonine, to avoid such errors, it has a 'posttransfer' editing activity that hydrolyzes mischarged Thr-tRNA(Val) in a tRNA-dependent manner. This chain is Valine--tRNA ligase, found in Methanopyrus kandleri (strain AV19 / DSM 6324 / JCM 9639 / NBRC 100938).